The chain runs to 638 residues: Chaperone protein HtpG (638 aa).

Residues 1 to 344 (MQKKETLEFQ…SNDLPLNVSR (344 aa)) are a; substrate-binding. Residues 345–560 (EILQNNENIY…ENDITTQMSK (216 aa)) form a b region. The c stretch occupies residues 561 to 638 (LLISTGQESP…LLLSNIIRLN (78 aa)).

The protein belongs to the heat shock protein 90 family. As to quaternary structure, homodimer.

The protein resides in the cytoplasm. In terms of biological role, molecular chaperone. Has ATPase activity. The chain is Chaperone protein HtpG from Wigglesworthia glossinidia brevipalpis.